Here is a 202-residue protein sequence, read N- to C-terminus: ATP-dependent Clp protease proteolytic subunit (202 aa).

Catalysis depends on serine 101, which acts as the Nucleophile. Residue histidine 126 is part of the active site.

Belongs to the peptidase S14 family. In terms of assembly, component of the chloroplastic Clp protease core complex.

The protein localises to the plastid. Its subcellular location is the chloroplast stroma. The catalysed reaction is Hydrolysis of proteins to small peptides in the presence of ATP and magnesium. alpha-casein is the usual test substrate. In the absence of ATP, only oligopeptides shorter than five residues are hydrolyzed (such as succinyl-Leu-Tyr-|-NHMec, and Leu-Tyr-Leu-|-Tyr-Trp, in which cleavage of the -Tyr-|-Leu- and -Tyr-|-Trp bonds also occurs).. Cleaves peptides in various proteins in a process that requires ATP hydrolysis. Has a chymotrypsin-like activity. Plays a major role in the degradation of misfolded proteins. The polypeptide is ATP-dependent Clp protease proteolytic subunit (Drimys granadensis).